We begin with the raw amino-acid sequence, 109 residues long: Large ribosomal subunit protein uL22 (109 aa).

The protein belongs to the universal ribosomal protein uL22 family. As to quaternary structure, part of the 50S ribosomal subunit.

Its function is as follows. This protein binds specifically to 23S rRNA; its binding is stimulated by other ribosomal proteins, e.g. L4, L17, and L20. It is important during the early stages of 50S assembly. It makes multiple contacts with different domains of the 23S rRNA in the assembled 50S subunit and ribosome. Functionally, the globular domain of the protein is located near the polypeptide exit tunnel on the outside of the subunit, while an extended beta-hairpin is found that lines the wall of the exit tunnel in the center of the 70S ribosome. The polypeptide is Large ribosomal subunit protein uL22 (Dehalococcoides mccartyi (strain ATCC BAA-2266 / KCTC 15142 / 195) (Dehalococcoides ethenogenes (strain 195))).